The primary structure comprises 305 residues: tRNA-cytidine(32) 2-sulfurtransferase (305 aa).

Residues 1-20 (MTAVLPLPQPLADPAPRDPR) form a disordered region. The PP-loop motif signature appears at 59-64 (SGGKDS). Cys-134, Cys-137, and Cys-225 together coordinate [4Fe-4S] cluster. The disordered stretch occupies residues 282 to 305 (DAPSGLDPDPRAWLSAGHATHDSD).

This sequence belongs to the TtcA family. Homodimer. Mg(2+) serves as cofactor. Requires [4Fe-4S] cluster as cofactor.

It is found in the cytoplasm. The enzyme catalyses cytidine(32) in tRNA + S-sulfanyl-L-cysteinyl-[cysteine desulfurase] + AH2 + ATP = 2-thiocytidine(32) in tRNA + L-cysteinyl-[cysteine desulfurase] + A + AMP + diphosphate + H(+). The protein operates within tRNA modification. Catalyzes the ATP-dependent 2-thiolation of cytidine in position 32 of tRNA, to form 2-thiocytidine (s(2)C32). The sulfur atoms are provided by the cysteine/cysteine desulfurase (IscS) system. The sequence is that of tRNA-cytidine(32) 2-sulfurtransferase from Xanthomonas axonopodis pv. citri (strain 306).